Consider the following 355-residue polypeptide: MRFSDNLAKILDKYENLGNTLSSGIMGDEFVKASKEYAELEDVVAKIKEYNKAKSELEEANNFKLEVGLDNATLEMIEDEIYTLENSLPKLERAVKIALLPKDDADSKSAIIEVRAGSGGEEAALFAAVLFNMYQRYAELKGWRFEILAISDTGIGGYKEASASIKGKDVFSKLKFESGVHRVQRVPETESQGRIHTSAATVAVLPEAEEVDIKIEDKDLRIDTYRASGAGGQHVNTTDSAVRITHIPTGITVALQDEKSQHKNKAKALKILRARIYEEERRKKEQERADSRRGQVGSGDRSERIRTYNFPQGRVSDHRINLTLYKIDEVVKNGQLDEFVEALIADDEAKKLLEI.

The residue at position 233 (Gln233) is an N5-methylglutamine. Positions 280–293 (ERRKKEQERADSRR) are enriched in basic and acidic residues. The tract at residues 280–308 (ERRKKEQERADSRRGQVGSGDRSERIRTY) is disordered.

It belongs to the prokaryotic/mitochondrial release factor family. Post-translationally, methylated by PrmC. Methylation increases the termination efficiency of RF1.

The protein resides in the cytoplasm. In terms of biological role, peptide chain release factor 1 directs the termination of translation in response to the peptide chain termination codons UAG and UAA. The sequence is that of Peptide chain release factor 1 from Rickettsia peacockii (strain Rustic).